The primary structure comprises 370 residues: uncharacterized protein (370 aa).

Positions 152, 154, 184, 215, 306, and 308 each coordinate a divalent metal cation.

This sequence belongs to the metallophosphoesterase superfamily. A divalent metal cation serves as cofactor.

This is an uncharacterized protein from Helicobacter pylori (strain J99 / ATCC 700824) (Campylobacter pylori J99).